The sequence spans 930 residues: Zn(2)-C6 fungal-type transcription factor FTF1c (930 aa).

The segment at residues 137–164 (CIACRRKKIRCSGEKPACEHCLCSYIPC) is a DNA-binding region (zn(2)-C6 fungal-type).

It is found in the nucleus. Functionally, zn(2)-C6 fungal-type transcription factor that has a role in the establishment of the fungus within the plant and/or the progress of the disease. Regulates the expression of virulence factors such as SIX1 and SIX6. The sequence is that of Zn(2)-C6 fungal-type transcription factor FTF1c from Fusarium oxysporum f. sp. lycopersici (strain 4287 / CBS 123668 / FGSC 9935 / NRRL 34936) (Fusarium vascular wilt of tomato).